A 326-amino-acid chain; its full sequence is Meso-diaminopimelate D-dehydrogenase (326 aa).

NADP(+) contacts are provided by residues 11-14 (YGNL), 35-37 (TRR), 69-72 (CGGS), 92-94 (SFD), and 121-125 (VGWDP). Substrate contacts are provided by residues Asp-94, Asp-124, Trp-148, 154-155 (QG), Thr-173, Arg-199, His-249, and Asn-276.

Belongs to the diaminopimelate dehydrogenase family. In terms of assembly, homodimer.

The enzyme catalyses meso-2,6-diaminopimelate + NADP(+) + H2O = (S)-2-amino-6-oxoheptanedioate + NH4(+) + NADPH + H(+). It functions in the pathway amino-acid biosynthesis; L-lysine biosynthesis via DAP pathway; DL-2,6-diaminopimelate from (S)-tetrahydrodipicolinate: step 1/1. Its activity is regulated as follows. L,L-2,6-diaminopimelate, D,D-2,6-diaminopimelate and meso-2,5-diaminoadipate competitively inhibit the oxidation of meso-2,6-diaminopimelate. L-2-amino-6-methylene-pimelate is also a potent competitive inhibitor (5 uM) of this reaction. Glyoxylate inhibits the reductive amination of L-2-amino-6-oxopimelate about 30%. The enzyme is inhibited completely by p-chloromercuribenzoate and HgCl(2) in vitro. Catalyzes the reversible NADPH-dependent reductive amination of L-2-amino-6-oxopimelate, the acyclic form of L-tetrahydrodipicolinate, to generate the meso compound, D,L-2,6-diaminopimelate. Probably plays a role in lysine biosynthesis. Exhibits a high substrate specificity, since alpha-ketoglutarate, pyruvate, oxaloacetate, glyoxylate, alpha-ketobutyrate, alpha-ketovalerate, alpha-ketocaproate, alpha-ketoisocaproate, alpha-ketoisovalerate, and phenylpyruvate are not substrates for the reductive amination reaction, and L,L-2,6-diaminopimelate, D,D-2,6-diaminopimelate, DL-alpha-aminopimelate, meso- and DL-2,5-diaminoadipate, L-djenkolate, L-cystine, L-lysine, S-(beta-aminoethy1)-L-homocysteine, L-ornithine, L-arginine, L-alpha,gamma-diaminobutyrate, L-histidine, L-phenylalanine, L-tyrosine, L-glutamate, L-aspartate, L-leucine, L-valine, L-methionine, L-serine, L-alanine, L-alpha-aminobutyrate, D-lysine, D-glutamate, D-leucine, D-alanine, D-phenylalanine, epsilon-aminocaproate, 7-aminoheptanoate, and 8-aminooctanoate are not substrates for the oxidative deamination reaction. Cannot use NAD(+) or NAD(+) analogs instead of NADP(+) for the oxidative deamination reaction. This is Meso-diaminopimelate D-dehydrogenase (dapdh) from Lysinibacillus sphaericus (Bacillus sphaericus).